The sequence spans 246 residues: CTD nuclear envelope phosphatase 1 homolog (246 aa).

Residues 3-23 traverse the membrane as a helical segment; it reads TIAQSVFCFLAGFFNFFLLYF. One can recognise an FCP1 homology domain in the interval 53–220; it reads LTVKRKILVL…LNLLPFLDAL (168 aa).

The protein belongs to the dullard family.

It is found in the membrane. Its subcellular location is the nucleus envelope. It catalyses the reaction O-phospho-L-seryl-[protein] + H2O = L-seryl-[protein] + phosphate. The catalysed reaction is O-phospho-L-threonyl-[protein] + H2O = L-threonyl-[protein] + phosphate. Functionally, serine/threonine protein phosphatase that may dephosphorylate and activate lipin-like phosphatases. Lipins are phosphatidate phosphatases that catalyze the conversion of phosphatidic acid to diacylglycerol and control the metabolism of fatty acids at different levels. May indirectly modulate the lipid composition of nuclear and/or endoplasmic reticulum membranes and be required for proper nuclear membrane morphology and/or dynamics. Contributes to closure of nuclear envelope (NE) holes and prevents excess nuclear membranes after meiosis and mitosis, possibly through spatial regulation of lipin. May limit the production of endoplasmic reticulum (ER) sheets proximal to the NE to prevent the ER membranes that feed into NE openings from invading the nuclear interior and thereby restrict nuclear transport to nuclear pore complexes (NPCs). May also indirectly regulate the production of lipid droplets and triacylglycerol. The protein is CTD nuclear envelope phosphatase 1 homolog (cnep-1) of Caenorhabditis elegans.